A 293-amino-acid chain; its full sequence is Homoserine kinase (293 aa).

ATP is bound at residue 84–94 (PLSRGLGSSSA).

The protein belongs to the GHMP kinase family. Homoserine kinase subfamily.

The protein localises to the cytoplasm. The catalysed reaction is L-homoserine + ATP = O-phospho-L-homoserine + ADP + H(+). It functions in the pathway amino-acid biosynthesis; L-threonine biosynthesis; L-threonine from L-aspartate: step 4/5. In terms of biological role, catalyzes the ATP-dependent phosphorylation of L-homoserine to L-homoserine phosphate. The chain is Homoserine kinase from Nitratiruptor sp. (strain SB155-2).